The chain runs to 254 residues: Chymotrypsin-like serine proteinase (254 aa).

The first 18 residues, Met1–Ala18, serve as a signal peptide directing secretion. A propeptide spans Glu19–Asn23 (activation peptide). The 231-residue stretch at Ile24–Gln254 folds into the Peptidase S1 domain. The cysteines at positions 53 and 69 are disulfide-linked. Active-site charge relay system residues include His68 and Asp117. 3 cysteine pairs are disulfide-bonded: Cys146/Cys218, Cys181/Cys199, and Cys208/Cys233. Catalysis depends on Ser212, which acts as the Charge relay system.

It belongs to the peptidase S1 family. In terms of assembly, monomer. In terms of tissue distribution, expressed specifically in the distal quarter of the intestine.

The protein resides in the secreted. The protein localises to the extracellular space. Activated by an autocatalytic mechanism. Specificity similar to chymotrypsin. This is Chymotrypsin-like serine proteinase from Haliotis rufescens (California red abalone).